We begin with the raw amino-acid sequence, 434 residues long: Probable glucuronosyltransferase Os02g0520750 (434 aa).

Residues 1–10 (MVGARAGRVP) lie on the Cytoplasmic side of the membrane. Residues 11 to 31 (AAAAAAAAVLIVAACVFSSLA) traverse the membrane as a helical; Signal-anchor for type II membrane protein segment. Residues 32-434 (GAAAAAEVVG…GPVADLKPWK (403 aa)) lie on the Lumenal side of the membrane. Residues asparagine 160 and asparagine 421 are each glycosylated (N-linked (GlcNAc...) asparagine).

The protein belongs to the glycosyltransferase 47 family.

It is found in the golgi apparatus membrane. Involved in the synthesis of glucuronoxylan hemicellulose in secondary cell walls. This chain is Probable glucuronosyltransferase Os02g0520750, found in Oryza sativa subsp. japonica (Rice).